The chain runs to 254 residues: 3-deoxy-manno-octulosonate cytidylyltransferase (254 aa).

The protein belongs to the KdsB family.

Its subcellular location is the cytoplasm. It carries out the reaction 3-deoxy-alpha-D-manno-oct-2-ulosonate + CTP = CMP-3-deoxy-beta-D-manno-octulosonate + diphosphate. It functions in the pathway nucleotide-sugar biosynthesis; CMP-3-deoxy-D-manno-octulosonate biosynthesis; CMP-3-deoxy-D-manno-octulosonate from 3-deoxy-D-manno-octulosonate and CTP: step 1/1. It participates in bacterial outer membrane biogenesis; lipopolysaccharide biosynthesis. Functionally, activates KDO (a required 8-carbon sugar) for incorporation into bacterial lipopolysaccharide in Gram-negative bacteria. In Pseudoalteromonas atlantica (strain T6c / ATCC BAA-1087), this protein is 3-deoxy-manno-octulosonate cytidylyltransferase.